A 133-amino-acid polypeptide reads, in one-letter code: Small ribosomal subunit protein uS8 (133 aa).

The tract at residues 1-30 (MANHDPISDMLTRIRNASEKRHETTKVPAS) is disordered. Basic and acidic residues predominate over residues 16-25 (NASEKRHETT).

The protein belongs to the universal ribosomal protein uS8 family. In terms of assembly, part of the 30S ribosomal subunit. Contacts proteins S5 and S12.

One of the primary rRNA binding proteins, it binds directly to 16S rRNA central domain where it helps coordinate assembly of the platform of the 30S subunit. The protein is Small ribosomal subunit protein uS8 of Synechococcus sp. (strain CC9902).